The primary structure comprises 555 residues: MASSNTYSNFKLATELPAWSKLQKLYDAQGKSLNVKEEFQKDSARYNKYAKTLTNYDGSKILFDFSKNLINDEILATLIELAKEAKVTDLRDAMFAGEHINFTEDRAVYHVALRNRANKPMKVDGVDVAPEVDAVLQHMKEFSEQVRSGEWKGYTGKKITDVVNIGIGGSDLGPVMVTEALKHYAGVLDVHFVSNIDGTHIAEVLKVVDPETTLFLVASKTFTTAETITNANTAKNWFLSKTGNDQSNIAKHFAALSTNETEVAKFGIDTKNMFGFENWVGGRYSVWSAIGLSVALYIGFDNFEAFLKGAEAVDKHFVETPLEDNIPLLGGLLSVWYNNFFGAQTHLVAPFDQYLHRFPAYLQQLSMESNGKSVTRGNVFSTYSTGSILFGEPATNAQHSFFQLVHQGTKLIPSDFILAAQSHNPIENNLHQKMLASNFFAQAEALMVGKDEAQVKSEGATGGLVPHKIFSGNRPTTSILAQKITPAALGSLIAYYEHVTFTEGAIWNINSFDQWGVELGKVLAKVIGKELDNTEKITAHDASTNGLINQFKEWL.

D-glucose 6-phosphate is bound by residues 169–170 (GS), 219–224 (SKTFTT), glutamine 364, glutamate 368, histidine 399, and lysine 521. The Proton donor role is filled by glutamate 368. Catalysis depends on residues histidine 399 and lysine 521.

This sequence belongs to the GPI family. As to quaternary structure, homodimer.

The protein localises to the cytoplasm. It localises to the cytosol. It catalyses the reaction alpha-D-glucose 6-phosphate = beta-D-fructose 6-phosphate. It participates in carbohydrate degradation; glycolysis; D-glyceraldehyde 3-phosphate and glycerone phosphate from D-glucose: step 2/4. In terms of biological role, in the cytoplasm, catalyzes the conversion of glucose-6-phosphate to fructose-6-phosphate, the second step in glycolysis, and the reverse reaction during gluconeogenesis. This Candida glabrata (strain ATCC 2001 / BCRC 20586 / JCM 3761 / NBRC 0622 / NRRL Y-65 / CBS 138) (Yeast) protein is Glucose-6-phosphate isomerase (PGI1).